Consider the following 237-residue polypeptide: MAEAASSGSNSTSPPKDNGYIPGDDAWTICRNLWRGLTGKMTQEGMEQFRVARDVRNEKEDCKRCEDQRDYLLQYSPLIRFLQDNIQQLGGNISKHNIFCRRCKNRQAGGFDPDYGIQICANEMRNQGHLEDTLAHEMIHAYDHMRFKVDWDDNLRHAACAEIRASNLSGECRWMREFFSRGQWKFAQHHQECVRRRAILSVQARPACKDEQHATQVVNEVWDSCFRDTRPFDEIYR.

Polar residues predominate over residues 1 to 15; sequence MAEAASSGSNSTSPP. A disordered region spans residues 1–20; the sequence is MAEAASSGSNSTSPPKDNGY. An a divalent metal cation-binding site is contributed by histidine 136. The active site involves glutamate 137. Residue histidine 140 participates in a divalent metal cation binding.

It belongs to the peptidase M76 family.

It is found in the mitochondrion inner membrane. In terms of biological role, has a dual role in the assembly of mitochondrial ATPase. Acts as a protease that removes N-terminal residues of mitochondrial ATPase CF(0) subunit 6 at the intermembrane space side. Also involved in the correct assembly of the membrane-embedded ATPase CF(0) particle, probably mediating association of subunit 6 with the subunit 9 ring. This Coccidioides immitis (strain RS) (Valley fever fungus) protein is Mitochondrial inner membrane protease ATP23 (ATP23).